A 171-amino-acid polypeptide reads, in one-letter code: Protein GrpE (171 aa).

A disordered region spans residues 1–22 (MNHEHPDIESQQSAADAAAAAG).

This sequence belongs to the GrpE family. As to quaternary structure, homodimer.

The protein localises to the cytoplasm. Participates actively in the response to hyperosmotic and heat shock by preventing the aggregation of stress-denatured proteins, in association with DnaK and GrpE. It is the nucleotide exchange factor for DnaK and may function as a thermosensor. Unfolded proteins bind initially to DnaJ; upon interaction with the DnaJ-bound protein, DnaK hydrolyzes its bound ATP, resulting in the formation of a stable complex. GrpE releases ADP from DnaK; ATP binding to DnaK triggers the release of the substrate protein, thus completing the reaction cycle. Several rounds of ATP-dependent interactions between DnaJ, DnaK and GrpE are required for fully efficient folding. The sequence is that of Protein GrpE from Stenotrophomonas maltophilia (strain R551-3).